Here is a 402-residue protein sequence, read N- to C-terminus: Probable tRNA pseudouridine synthase tag-124 (402 aa).

D85 (nucleophile) is an active-site residue. Residues 383-402 form a disordered region; it reads SKKEKMAEKKKNGEESSDKL.

The protein belongs to the tRNA pseudouridine synthase TruA family.

It catalyses the reaction a uridine in tRNA = a pseudouridine in tRNA. In terms of biological role, formation of pseudouridine at position 38 and 39 in the anticodon stem and loop of transfer RNAs. The protein is Probable tRNA pseudouridine synthase tag-124 (tag-124) of Caenorhabditis elegans.